A 307-amino-acid polypeptide reads, in one-letter code: MVTATHPHSLGRLSRMRHLARQYAALTKPRVTQLAVFCAIIGMFLATPGMVPWPVLIGGAAGIWLLAGAAFAINCLVEQKIDALMRRTAWRPSATGEITTRQTLVFSAILGGAGMWLLHVYANDLTMWLTFATFLGYAVVYTILLKPATPQNIVIGGLSGAMPPALGWAAVAGEVPAEAWFLVLIIFTWTPPHFWALALYRRADYAKSGLPMLPVTHGERYTLLHILLYTLIMIAATLLPFVYGMSGYIYLAAALALGAGFLAYAWKLYRNYSDELAQRTFRFSILYLSLLFAALLVDHYFKFVPQV.

A run of 9 helical transmembrane segments spans residues 31 to 51 (VTQL…PGMV), 53 to 73 (WPVL…AFAI), 103 to 123 (TLVF…VYAN), 125 to 145 (LTMW…TILL), 153 to 173 (IVIG…AVAG), 179 to 199 (AWFL…ALAL), 223 to 243 (LLHI…PFVY), 246 to 266 (SGYI…AYAW), and 285 to 305 (ILYL…KFVP).

Belongs to the UbiA prenyltransferase family. Protoheme IX farnesyltransferase subfamily.

Its subcellular location is the cell inner membrane. The enzyme catalyses heme b + (2E,6E)-farnesyl diphosphate + H2O = Fe(II)-heme o + diphosphate. It participates in porphyrin-containing compound metabolism; heme O biosynthesis; heme O from protoheme: step 1/1. Functionally, converts heme B (protoheme IX) to heme O by substitution of the vinyl group on carbon 2 of heme B porphyrin ring with a hydroxyethyl farnesyl side group. This is Protoheme IX farnesyltransferase from Cupriavidus taiwanensis (strain DSM 17343 / BCRC 17206 / CCUG 44338 / CIP 107171 / LMG 19424 / R1) (Ralstonia taiwanensis (strain LMG 19424)).